The chain runs to 621 residues: GPI-anchor transamidase component GPAA1 (621 aa).

Residues 2 to 19 lie on the Cytoplasmic side of the membrane; the sequence is GLLSDPVRRRALARLVLR. A helical membrane pass occupies residues 20 to 41; that stretch reads LNAPLCVLSYVAGIAWFLALVF. The Lumenal segment spans residues 42-370; sequence PPLTQRTYMS…LLPGLSRFVS (329 aa). Residues Tyr-49 and Ser-51 each contribute to the a 2-acyl-6-[6-phosphoethanolamine-alpha-D-mannosyl-(1-&gt;2)-6-phosphoethanolamine-alpha-D-mannosyl-(1-&gt;6)-2-phosphoethanolamine-alpha-D-mannosyl-(1-&gt;4)-alpha-D-glucosaminyl]-1-(1-radyl,2-acyl-sn-glycero-3-phospho)-1D-myo-inositol site. Asn-203 carries N-linked (GlcNAc...) asparagine glycosylation. An intrachain disulfide couples Cys-259 to Cys-266. His-354, Gln-355, and Ser-356 together coordinate a 2-acyl-6-[6-phosphoethanolamine-alpha-D-mannosyl-(1-&gt;2)-6-phosphoethanolamine-alpha-D-mannosyl-(1-&gt;6)-2-phosphoethanolamine-alpha-D-mannosyl-(1-&gt;4)-alpha-D-glucosaminyl]-1-(1-radyl,2-acyl-sn-glycero-3-phospho)-1D-myo-inositol. Gln-355 is a Mg(2+) binding site. A helical membrane pass occupies residues 371-393; the sequence is IGLYMPAVGFLLLVLGLKALELW. Residues 394–425 lie on the Cytoplasmic side of the membrane; it reads MQLHEAGMGLEEPGGAPGPSVPLPPSQGVGLA. A helical membrane pass occupies residues 426-450; it reads SLVAPLLISQAMGLALYVLPVLGQH. At 451–462 the chain is on the lumenal side; sequence VATQHFPVAEAE. The helical transmembrane segment at 463-483 threads the bilayer; the sequence is AVVLTLLAIYAAGLALPHNTH. At 484–495 the chain is on the cytoplasmic side; that stretch reads RVVSTQAPDRGW. A run of 2 helical transmembrane segments spans residues 496 to 519 and 520 to 536; these read MALK…TNFS and LGFL…ALAK. Residues 537 to 540 lie on the Cytoplasmic side of the membrane; the sequence is PHGP. Residues 541-563 form a helical membrane-spanning segment; the sequence is RTLYAALLVLTSPAATLLGSLFL. The Lumenal segment spans residues 564–597; the sequence is WRELQEAPLSLAEGWQLFLAALAQGVLEHHTYGA. The chain crosses the membrane as a helical span at residues 598–619; that stretch reads LLFPLLSLGLYPCWLLFWNVLF. Residues 620–621 are Cytoplasmic-facing; it reads WK.

In terms of assembly, heteropentamer. Part of the GPI-anchor transamidase complex, consisting of PIGK, PIGT, PIGS, PIGU and GAA1. Interacts with PIGK. As to expression, ubiquitously expressed in fetal and adult tissues. Expressed at higher levels in fetal tissues than adult tissues.

It localises to the endoplasmic reticulum membrane. Its pathway is glycolipid biosynthesis; glycosylphosphatidylinositol-anchor biosynthesis. Its function is as follows. Component of the glycosylphosphatidylinositol-anchor (GPI-anchor) transamidase (GPI-T) complex that catalyzes the formation of the linkage between a proprotein and a GPI-anchor and participates in GPI anchored protein biosynthesis. Binds GPI-anchor. This chain is GPI-anchor transamidase component GPAA1, found in Homo sapiens (Human).